A 265-amino-acid polypeptide reads, in one-letter code: Beta-lactamase SHV-4 (265 aa).

Serine 45 functions as the Acyl-ester intermediate in the catalytic mechanism. Cysteine 52 and cysteine 98 are disulfide-bonded. Catalysis depends on glutamate 143, which acts as the Proton acceptor. Position 209 to 211 (209 to 211) interacts with substrate; it reads KTG.

This sequence belongs to the class-A beta-lactamase family.

It carries out the reaction a beta-lactam + H2O = a substituted beta-amino acid. Functionally, SHV enzymes hydrolyze broad spectrum cephalosporins notably cefotaxime and ceftazidime. SHV-4 causes particularly high levels of resistance to aztreonam and ceftazidime. In Klebsiella pneumoniae, this protein is Beta-lactamase SHV-4 (bla).